Here is an 806-residue protein sequence, read N- to C-terminus: Lon protease (806 aa).

Positions Tyr-14 to Ile-207 constitute a Lon N-terminal domain. Gly-359 to Thr-366 provides a ligand contact to ATP. The Lon proteolytic domain occupies Asp-594–Arg-775. Residues Ser-681 and Lys-724 contribute to the active site. The segment at Ser-786–His-806 is disordered.

It belongs to the peptidase S16 family. Homohexamer. Organized in a ring with a central cavity.

The protein resides in the cytoplasm. The catalysed reaction is Hydrolysis of proteins in presence of ATP.. Functionally, ATP-dependent serine protease that mediates the selective degradation of mutant and abnormal proteins as well as certain short-lived regulatory proteins. Required for cellular homeostasis and for survival from DNA damage and developmental changes induced by stress. Degrades polypeptides processively to yield small peptide fragments that are 5 to 10 amino acids long. Binds to DNA in a double-stranded, site-specific manner. In R.meliloti it is important for controlling the turnover of a constitutively expressed protein(s) that, when unregulated, disrupts normal nodule formation and normal growth. The sequence is that of Lon protease from Rhizobium meliloti (strain 1021) (Ensifer meliloti).